The chain runs to 805 residues: Arginine/serine-rich protein PNISR (805 aa).

Positions 74–88 (PNNHGNFQGDSNFNR) are enriched in polar residues. Disordered stretches follow at residues 74–331 (PNNH…EEKE) and 382–805 (LTGL…SRSR). Composition is skewed to pro residues over residues 100–115 (PPHPPPDQPWMPPTPG) and 183–195 (YWQPGPPGPPAPP). The span at 197 to 210 (NRRERPSSFRDRQR) shows a compositional bias: basic and acidic residues. Phosphoserine occurs at positions 204 and 211. Residue Lys218 forms a Glycyl lysine isopeptide (Lys-Gly) (interchain with G-Cter in SUMO2) linkage. Residues 237 to 276 (REGLEKMEREKQKKLEKERMEQQRSQLSKKEKKATEDAEG) adopt a coiled-coil conformation. Residues 238–258 (EGLEKMEREKQKKLEKERMEQ) are compositionally biased toward basic and acidic residues. Phosphoserine occurs at positions 290, 304, 313, and 321. The segment covering 290–299 (SDEEEEDTEN) has biased composition (acidic residues). Over residues 384 to 393 (GLGGLGGYGS) the composition is skewed to gly residues. The span at 421 to 463 (QKQEAFWRKEKEQQLLHDKQMEEEKQQTERVTKEMNEFIHKEQ) shows a compositional bias: basic and acidic residues. Residues 429-461 (KEKEQQLLHDKQMEEEKQQTERVTKEMNEFIHK) are a coiled coil. Phosphoserine is present on residues Ser465 and Ser467. Composition is skewed to basic and acidic residues over residues 470-486 (EAREADGDVVNEKKRTP) and 494-506 (EPKKEHKEKEKQG). Position 485 is a phosphothreonine (Thr485). Lys496 participates in a covalent cross-link: Glycyl lysine isopeptide (Lys-Gly) (interchain with G-Cter in SUMO2). The span at 508–550 (SRSGSSSSGSSSSNSRTSSTSSTVSSSSYSSSSGSSRTSSRSS) shows a compositional bias: low complexity. Basic residues-rich tracts occupy residues 551-579 (SPKRKKRHSRSRSPTIKARRSRSRSYSRR), 587-598 (ARVKIRDRRRSN), and 607-639 (RRNRSPSRERRRSRSRSRDRRTNRASRSRSRDR). The span at 659–721 (EAKEQERKKE…KRKRESERTF (63 aa)) shows a compositional bias: basic and acidic residues. Residues 673-703 (IDKDRKKKDKEREREQDKRKEKQKREEKDFK) adopt a coiled-coil conformation. Lys703 participates in a covalent cross-link: Glycyl lysine isopeptide (Lys-Gly) (interchain with G-Cter in SUMO2). Position 726 is a phosphoserine (Ser726). Residues 732–753 (IRHDSRQDSKKSTTKDSKKHSG) are compositionally biased toward basic and acidic residues. Positions 754 to 767 (SDSSGRSSSESPGS) are enriched in low complexity. Basic residues-rich tracts occupy residues 771–781 (KKAKKPKHSRS) and 789–805 (RSGKKASRKHKSKSRSR).

It belongs to the splicing factor SR family. In terms of assembly, interacts with PNN. Expressed in heart, skeletal muscle, thymus, spleen, kidney, liver, placenta and leukocytes.

It is found in the nucleus speckle. The chain is Arginine/serine-rich protein PNISR (PNISR) from Homo sapiens (Human).